The sequence spans 198 residues: Na(+)-translocating NADH-quinone reductase subunit E (198 aa).

Helical transmembrane passes span 11-31 (SVFI…FLAV), 35-55 (VSTA…AVPA), 77-97 (FLNF…LEMI), 110-130 (GIFL…SFMV), 140-160 (VVYG…LAGL), and 176-196 (LGIT…FSGI).

This sequence belongs to the NqrDE/RnfAE family. As to quaternary structure, composed of six subunits; NqrA, NqrB, NqrC, NqrD, NqrE and NqrF.

It localises to the cell inner membrane. The catalysed reaction is a ubiquinone + n Na(+)(in) + NADH + H(+) = a ubiquinol + n Na(+)(out) + NAD(+). Its function is as follows. NQR complex catalyzes the reduction of ubiquinone-1 to ubiquinol by two successive reactions, coupled with the transport of Na(+) ions from the cytoplasm to the periplasm. NqrA to NqrE are probably involved in the second step, the conversion of ubisemiquinone to ubiquinol. The polypeptide is Na(+)-translocating NADH-quinone reductase subunit E (Actinobacillus pleuropneumoniae serotype 5b (strain L20)).